A 420-amino-acid polypeptide reads, in one-letter code: FLYWCH transcription factor 3 (420 aa).

Residues 87 to 104 (SSTSPDSQPSSSSSVMSS) are compositionally biased toward low complexity. Disordered regions lie at residues 87–107 (SSTS…STDE) and 119–138 (KINK…YTPR). A compositionally biased stretch (polar residues) spans 123-134 (AQRQSSPNSSKP). An FLYWCH-type zinc finger spans residues 140–195 (IRERVLFDEHLYVFDKCSYDSKKRFFRCERKNTCPARIHTPFDAERVIHKVQVHNH).

In terms of biological role, probable transcription factor. May bind to the promoters of target genes, including micro-RNA genes, in order to repress expression, and acting redundantly with flh-2. This Caenorhabditis elegans protein is FLYWCH transcription factor 3.